A 239-amino-acid polypeptide reads, in one-letter code: Purine nucleoside phosphorylase DeoD-type 1 (239 aa).

His5 is a binding site for a purine D-ribonucleoside. Phosphate is bound by residues Gly21, Arg25, Arg44, and 88-91 (RVGS). Residues 180–182 (EME) and 204–205 (SD) each bind a purine D-ribonucleoside. The active-site Proton donor is the Asp205.

The protein belongs to the PNP/UDP phosphorylase family. Homohexamer; trimer of homodimers.

The catalysed reaction is a purine D-ribonucleoside + phosphate = a purine nucleobase + alpha-D-ribose 1-phosphate. It carries out the reaction a purine 2'-deoxy-D-ribonucleoside + phosphate = a purine nucleobase + 2-deoxy-alpha-D-ribose 1-phosphate. Functionally, catalyzes the reversible phosphorolytic breakdown of the N-glycosidic bond in the beta-(deoxy)ribonucleoside molecules, with the formation of the corresponding free purine bases and pentose-1-phosphate. The chain is Purine nucleoside phosphorylase DeoD-type 1 from Vibrio parahaemolyticus serotype O3:K6 (strain RIMD 2210633).